The primary structure comprises 151 residues: Mating pheromone 3 (151 aa).

Residues methionine 1–alanine 16 form the signal peptide. A propeptide spanning residues phenylalanine 17–lysine 52 is cleaved from the precursor.

The protein resides in the secreted. Mating ciliate pheromones (or gamones) are diffusible extracellular communication signals that distinguish different intraspecific classes of cells commonly referred to as 'mating types'. They prepare the latter for conjugation by changing their cell surface properties. The polypeptide is Mating pheromone 3 (PHR3) (Euplotoides octocarinatus (Freshwater ciliate)).